The following is a 282-amino-acid chain: Osteoclast-associated immunoglobulin-like receptor (282 aa).

The N-terminal stretch at 1-18 (MALVLILQLLTLWPLCHT) is a signal peptide. Ig-like domains follow at residues 22–116 (PSVP…SQPS) and 126–219 (ELPR…SWEG). N-linked (GlcNAc...) asparagine glycosylation is present at Asn-48. Cys-53 and Cys-100 are joined by a disulfide. Asn-145 carries an N-linked (GlcNAc...) asparagine glycan. The tract at residues 221-282 (GPEARPASSA…PAPPPSDPGV (62 aa)) is disordered. The segment covering 273 to 282 (PAPPPSDPGV) has biased composition (pro residues).

It belongs to the leukocyte receptor complex/polymeric immunoglobulin receptor (PIR/LRC) family.

The protein localises to the secreted. It localises to the cell membrane. Regulator of osteoclastogenesis which plays an important bone-specific function in osteoclast differentiation. The sequence is that of Osteoclast-associated immunoglobulin-like receptor (OSCAR) from Homo sapiens (Human).